Consider the following 207-residue polypeptide: Dephospho-CoA kinase (207 aa).

One can recognise a DPCK domain in the interval 10 to 207 (ILGLTGGIGS…FYLTLSGGQS (198 aa)). Residue 18-23 (GSGKSA) participates in ATP binding.

This sequence belongs to the CoaE family.

The protein resides in the cytoplasm. The catalysed reaction is 3'-dephospho-CoA + ATP = ADP + CoA + H(+). It functions in the pathway cofactor biosynthesis; coenzyme A biosynthesis; CoA from (R)-pantothenate: step 5/5. In terms of biological role, catalyzes the phosphorylation of the 3'-hydroxyl group of dephosphocoenzyme A to form coenzyme A. The protein is Dephospho-CoA kinase of Pseudomonas fluorescens (strain Pf0-1).